A 692-amino-acid polypeptide reads, in one-letter code: Elongation factor G (692 aa).

One can recognise a tr-type G domain in the interval E8–T282. GTP-binding positions include A17–T24, D81–H85, and N135–D138.

Belongs to the TRAFAC class translation factor GTPase superfamily. Classic translation factor GTPase family. EF-G/EF-2 subfamily.

It localises to the cytoplasm. In terms of biological role, catalyzes the GTP-dependent ribosomal translocation step during translation elongation. During this step, the ribosome changes from the pre-translocational (PRE) to the post-translocational (POST) state as the newly formed A-site-bound peptidyl-tRNA and P-site-bound deacylated tRNA move to the P and E sites, respectively. Catalyzes the coordinated movement of the two tRNA molecules, the mRNA and conformational changes in the ribosome. The protein is Elongation factor G of Pelotomaculum thermopropionicum (strain DSM 13744 / JCM 10971 / SI).